The sequence spans 66 residues: Large ribosomal subunit protein bL35 (66 aa).

Over residues 1-16 the composition is skewed to basic residues; it reads MPKQKTHRASAKRFKR. The disordered stretch occupies residues 1 to 20; sequence MPKQKTHRASAKRFKRTGSG.

This sequence belongs to the bacterial ribosomal protein bL35 family.

The polypeptide is Large ribosomal subunit protein bL35 (Streptococcus thermophilus (strain CNRZ 1066)).